A 369-amino-acid polypeptide reads, in one-letter code: Integrator complex assembly factor WDR73 (369 aa).

WD repeat units lie at residues 74–114 (FIDE…RDVI), 266–306 (AASE…SAMK), and 326–366 (GREP…VHDG).

This sequence belongs to the WD repeat WDR73 family.

The protein localises to the cytoplasm. Its subcellular location is the cytoskeleton. The protein resides in the spindle. It localises to the spindle pole. It is found in the cleavage furrow. In terms of biological role, component of a multiprotein complex required for the assembly of the RNA endonuclease module of the integrator complex. Associates with ints9 and ints11 in the cytoplasm, stabilizing the ints9-ints11 heterodimer and blocking the active site of ints11. Brat1 then joins the complex and plugs the active site of ints11, leading to wdr73 release and nuclear import of ints9 and ints11. This chain is Integrator complex assembly factor WDR73 (wdr73), found in Xenopus laevis (African clawed frog).